The primary structure comprises 104 residues: Nucleoid-associated protein Moth_0028 (104 aa).

It belongs to the YbaB/EbfC family. In terms of assembly, homodimer.

It localises to the cytoplasm. The protein resides in the nucleoid. Its function is as follows. Binds to DNA and alters its conformation. May be involved in regulation of gene expression, nucleoid organization and DNA protection. This is Nucleoid-associated protein Moth_0028 from Moorella thermoacetica (strain ATCC 39073 / JCM 9320).